The primary structure comprises 780 residues: Cullin-5 (780 aa).

Serine 34 carries the post-translational modification Phosphoserine. At threonine 210 the chain carries Phosphothreonine. Positions 713–772 (LRTRKLYIQIMKMRKKISNAQLQTELVEILKNMFLPQKKMIKEQIEWLIEHKYIRRDESD) constitute a Cullin neddylation domain. Lysine 724 is covalently cross-linked (Glycyl lysine isopeptide (Lys-Gly) (interchain with G-Cter in NEDD8)).

This sequence belongs to the cullin family. In terms of assembly, component of multiple cullin-5-RING E3 ubiquitin-protein ligase complexes (ECS complexes, also named CRL5 complexes) formed of CUL5, Elongin BC (ELOB and ELOC), RNF7/RBX2 and a variable SOCS box domain-containing protein as substrate-specific recognition component. CUL5-containing ECS complexes specifically contain RNF7/RBX2, and not RBX1, as catalytic subunit. Component of the ECS(ASB2) complex with the substrate recognition component ASB2. Component of the ECS(ASB6) complex with the substrate recognition component ASB6. Component of the ECS(ASB7) complex with the substrate recognition component ASB7. Component of the ECS(ASB9) complex with the substrate recognition component ASB9. Component of the ECS(ASB11) complex with the substrate recognition component ASB11. Component of the ECS(ASB12) complex with the substrate recognition component ASB12. Component of the ECS(LRRC41) complex with the substrate recognition component LRRC41. Component of the ECS(SOCS1) complex with the substrate recognition component SOCS1. Component of the ECS(SOCS2) complex with the substrate recognition component SOCS2. Component of the ECS(WSB1) complex with the substrate recognition subunit WSB1. Component of the ECS(SOCS3) complex with the substrate recognition component SOCS3. Component of the ECS(SOCS7) complex with the substrate recognition component SOCS7. Component of the ECS(SPSB1) complex with the substrate recognition component SPSB1. Component of the ECS(SPSB3) complex with the substrate recognition component SPSB3. Component of the ECS(SPSB2) complex with the substrate recognition component SPSB2. Component of the ECS(SPSB4) complex with the substrate recognition component SPSB4. Component of the ECS(RAB40) complex with the substrate recognition subunit RAB40A, RAB40B or RAB40C. Component of the ECS(KLHDC1) complex with the substrate recognition component KLHDC1. Component of the ECS(PCMTD1) complex with the substrate recognition subunit PCMTD1. May also form complexes containing RBX1 and ELOA or VHL; additional evidence is however required to confirm this result in vivo. Interacts (when neddylated) with ARIH2; leading to activate the E3 ligase activity of ARIH2. Interacts with ERCC6; the interaction is induced by DNA damaging agents or inhibitors of RNA polymerase II elongation. Interacts with ELOA (via the BC-box). Interacts (unneddylated form) with DCUN1D1, DCUN1D2, DCUN1D3, DCUN1D4 and DCUN1D5; these interactions promote the cullin neddylation. Neddylated; which enhances the ubiquitination activity of ECS complexes and prevents binding of the inhibitor CAND1. Deneddylated via its interaction with the COP9 signalosome (CSN). Kidney collecting tubules.

Its subcellular location is the nucleus. It functions in the pathway protein modification; protein ubiquitination. In terms of biological role, core component of multiple cullin-5-RING E3 ubiquitin-protein ligase complexes (ECS complexes, also named CRL5 complexes), which mediate the ubiquitination and subsequent proteasomal degradation of target proteins. Acts a scaffold protein that contributes to catalysis through positioning of the substrate and the ubiquitin-conjugating enzyme. The functional specificity of the E3 ubiquitin-protein ligase complex depends on the variable SOCS box-containing substrate recognition component. Acts as a key regulator of neuron positioning during cortex development: component of various SOCS-containing ECS complexes, such as the ECS(SOCS7) complex, that regulate reelin signaling by mediating ubiquitination and degradation of DAB1. ECS(SOCS1) seems to direct ubiquitination of JAK2. The ECS(SOCS2) complex mediates the ubiquitination and subsequent proteasomal degradation of phosphorylated EPOR and GHR. The ECS(SPSB3) complex catalyzes ubiquitination of nuclear CGAS. ECS(KLHDC1) complex is part of the DesCEND (destruction via C-end degrons) pathway and mediates ubiquitination and degradation of truncated SELENOS selenoprotein produced by failed UGA/Sec decoding, which ends with a glycine. The ECS(ASB9) complex mediates ubiquitination and degradation of CKB. As part of some ECS complex, promotes 'Lys-11'-linked ubiquitination and degradation of BTRC. As part of a multisubunit ECS complex, polyubiquitinates monoubiquitinated POLR2A. As part of the ECS(RAB40C) complex, mediates ANKRD28 ubiquitination and degradation, thereby regulating protein phosphatase 6 (PP6) complex activity and focal adhesion assembly during cell migration. As part of the ECS(RAB40A) complex, mediates RHOU 'Lys-48'-linked ubiquitination and degradation, thus inhibiting focal adhesion disassembly during cell migration. As part of the ECS(RAB40B) complex, mediates LIMA1/EPLIN and RAP2 ubiquitination, thereby regulating actin cytoskeleton dynamics and stress fiber formation during cell migration. May form a cell surface vasopressin receptor. The polypeptide is Cullin-5 (CUL5) (Oryctolagus cuniculus (Rabbit)).